A 514-amino-acid polypeptide reads, in one-letter code: MKKLKINYLFIGILTLLLAAALWPSIPWFGKTENHIAAIQARGVLRVSTIDSPLTYSVINGKKYGLDYELAQQFANYLGVKLKVTVRQNISQLFDDLDNGNADLLAAGLVYDSARVKNYQPGPMYYSVSQQLVYRVGQYRPRSLATVNENQLTIAPGHVVVNDLQRLKETKFPDLSWKVDDKKGSTTLLEEVISGKLDYTIADSVAISLFQRVHPELAVALDVTDEQPVTWFSRLDDDNTLSAALLDFFNSINEDGSLARIEEKYLGHGDDFDYVDTRSFLRAVDNVLPELEPLFKKYAKEIDWRLLAAISYQESHWDPLATSSTGVRGLMMLTKNTAQSLGLTDRTDAEQSISGGARYLEDMMAKVPETVPEDERIWFALAAYNMGYAHMLDARSLTVKTKGNPDSWTDVKQRLPLLSQKPYYSKLTYGYARGHEAYAYVENIRKYQISLVGYLQEKEKQEAEAMKLAQDYPAVSPEELNKTPFPLLSFLSQSSGYLTHSPSLLFTPQKKEEK.

A signal peptide spans 1–30 (MKKLKINYLFIGILTLLLAAALWPSIPWFG). The interval 31 to 269 (KTENHIAAIQ…RIEEKYLGHG (239 aa)) is non-LT domain. The LT domain stretch occupies residues 270–514 (DDFDYVDTRS…LFTPQKKEEK (245 aa)). Glutamate 314 is a catalytic residue.

The protein in the N-terminal section; belongs to the bacterial solute-binding protein 3 family. It in the C-terminal section; belongs to the transglycosylase Slt family.

The protein resides in the cell outer membrane. The enzyme catalyses Exolytic cleavage of the (1-&gt;4)-beta-glycosidic linkage between N-acetylmuramic acid (MurNAc) and N-acetylglucosamine (GlcNAc) residues in peptidoglycan, from either the reducing or the non-reducing ends of the peptidoglycan chains, with concomitant formation of a 1,6-anhydrobond in the MurNAc residue.. Functionally, murein-degrading enzyme that degrades murein glycan strands and insoluble, high-molecular weight murein sacculi, with the concomitant formation of a 1,6-anhydromuramoyl product. Lytic transglycosylases (LTs) play an integral role in the metabolism of the peptidoglycan (PG) sacculus. Their lytic action creates space within the PG sacculus to allow for its expansion as well as for the insertion of various structures such as secretion systems and flagella. The sequence is that of Membrane-bound lytic murein transglycosylase F from Salmonella choleraesuis (strain SC-B67).